The primary structure comprises 344 residues: Holliday junction branch migration complex subunit RuvB (344 aa).

Positions 1–10 (MAIQSSSSGS) are enriched in low complexity. Positions 1 to 37 (MAIQSSSSGSKPPAPKRLVAPEATAAEGDGGRDEGLR) are disordered. Residues 13–197 (PAPKRLVAPE…FGLIQRLEFY (185 aa)) are large ATPase domain (RuvB-L). Residues Leu-36, Arg-37, Gly-78, Lys-81, Thr-82, Thr-83, 144–146 (EDF), Arg-187, Tyr-197, and Arg-234 contribute to the ATP site. Thr-82 is a Mg(2+) binding site. The segment at 198–268 (SCSDLEAIVS…VVVEALAMHR (71 aa)) is small ATPAse domain (RuvB-S). Residues 271 to 344 (GRGLDPSDRR…DAGRAHLEAA (74 aa)) are head domain (RuvB-H). The DNA site is built by Arg-326 and Arg-331.

Belongs to the RuvB family. In terms of assembly, homohexamer. Forms an RuvA(8)-RuvB(12)-Holliday junction (HJ) complex. HJ DNA is sandwiched between 2 RuvA tetramers; dsDNA enters through RuvA and exits via RuvB. An RuvB hexamer assembles on each DNA strand where it exits the tetramer. Each RuvB hexamer is contacted by two RuvA subunits (via domain III) on 2 adjacent RuvB subunits; this complex drives branch migration. In the full resolvosome a probable DNA-RuvA(4)-RuvB(12)-RuvC(2) complex forms which resolves the HJ.

It is found in the cytoplasm. The catalysed reaction is ATP + H2O = ADP + phosphate + H(+). In terms of biological role, the RuvA-RuvB-RuvC complex processes Holliday junction (HJ) DNA during genetic recombination and DNA repair, while the RuvA-RuvB complex plays an important role in the rescue of blocked DNA replication forks via replication fork reversal (RFR). RuvA specifically binds to HJ cruciform DNA, conferring on it an open structure. The RuvB hexamer acts as an ATP-dependent pump, pulling dsDNA into and through the RuvAB complex. RuvB forms 2 homohexamers on either side of HJ DNA bound by 1 or 2 RuvA tetramers; 4 subunits per hexamer contact DNA at a time. Coordinated motions by a converter formed by DNA-disengaged RuvB subunits stimulates ATP hydrolysis and nucleotide exchange. Immobilization of the converter enables RuvB to convert the ATP-contained energy into a lever motion, pulling 2 nucleotides of DNA out of the RuvA tetramer per ATP hydrolyzed, thus driving DNA branch migration. The RuvB motors rotate together with the DNA substrate, which together with the progressing nucleotide cycle form the mechanistic basis for DNA recombination by continuous HJ branch migration. Branch migration allows RuvC to scan DNA until it finds its consensus sequence, where it cleaves and resolves cruciform DNA. The polypeptide is Holliday junction branch migration complex subunit RuvB (Synechococcus sp. (strain RCC307)).